A 331-amino-acid polypeptide reads, in one-letter code: 3-dehydroquinate synthase homolog (331 aa).

It belongs to the archaeal-type DHQ synthase family.

The chain is 3-dehydroquinate synthase homolog from Persephonella marina (strain DSM 14350 / EX-H1).